The primary structure comprises 413 residues: L-cysteine:1D-myo-inositol 2-amino-2-deoxy-alpha-D-glucopyranoside ligase (413 aa).

C43 contributes to the Zn(2+) binding site. L-cysteinyl-5'-AMP is bound by residues 43–46 (CGIT), T58, and 81–83 (NIT). A 'HIGH' region motif is present at residues 45–55 (ITPYDATHLGH). The short motif at 187 to 192 (ERGGDP) is the 'ERGGDP' region element. W227 serves as a coordination point for L-cysteinyl-5'-AMP. Residue C231 participates in Zn(2+) binding. Residue 249–251 (GND) participates in L-cysteinyl-5'-AMP binding. Zn(2+) is bound at residue H256. An L-cysteinyl-5'-AMP-binding site is contributed by V283. The short motif at 289-293 (KMSKS) is the 'KMSKS' region element.

The protein belongs to the class-I aminoacyl-tRNA synthetase family. MshC subfamily. As to quaternary structure, monomer. Zn(2+) serves as cofactor.

The catalysed reaction is 1D-myo-inositol 2-amino-2-deoxy-alpha-D-glucopyranoside + L-cysteine + ATP = 1D-myo-inositol 2-(L-cysteinylamino)-2-deoxy-alpha-D-glucopyranoside + AMP + diphosphate + H(+). Functionally, catalyzes the ATP-dependent condensation of GlcN-Ins and L-cysteine to form L-Cys-GlcN-Ins. The polypeptide is L-cysteine:1D-myo-inositol 2-amino-2-deoxy-alpha-D-glucopyranoside ligase (Gordonia bronchialis (strain ATCC 25592 / DSM 43247 / BCRC 13721 / JCM 3198 / KCTC 3076 / NBRC 16047 / NCTC 10667) (Rhodococcus bronchialis)).